The primary structure comprises 506 residues: Galactose/methyl galactoside import ATP-binding protein MglA (506 aa).

ABC transporter domains are found at residues 14–249 and 264–506; these read LEMS…VGRS and VILE…SLHL. ATP is bound at residue 46 to 53; it reads GENGAGKS.

This sequence belongs to the ABC transporter superfamily. Galactose/methyl galactoside importer (TC 3.A.1.2.3) family. As to quaternary structure, the complex is composed of one ATP-binding protein (MglA), two transmembrane proteins (MglC) and a solute-binding protein (MglB).

It is found in the cell inner membrane. The enzyme catalyses D-galactose(out) + ATP + H2O = D-galactose(in) + ADP + phosphate + H(+). It carries out the reaction methyl beta-D-galactoside(out) + ATP + H2O = methyl beta-D-galactoside(in) + ADP + phosphate + H(+). Its function is as follows. Part of the ABC transporter complex MglABC involved in galactose/methyl galactoside import. Responsible for energy coupling to the transport system. The sequence is that of Galactose/methyl galactoside import ATP-binding protein MglA from Shigella flexneri serotype 5b (strain 8401).